An 850-amino-acid polypeptide reads, in one-letter code: Transforming growth factor beta receptor type 3 (850 aa).

Residues 1 to 22 (MAVTSHHMVPVFVLMSACLATA) form the signal peptide. The Extracellular portion of the chain corresponds to 23 to 785 (GPEPSTRCEL…QIFHGLDTLT (763 aa)). The cysteines at positions 54 and 199 are disulfide-linked. 2 N-linked (GlcNAc...) asparagine glycosylation sites follow: N143 and N491. One can recognise a ZP domain in the interval 454–728 (KCDNEKMVVA…PKCVTPDDAC (275 aa)). Residues 528-557 (SPGDSSGWPDGYEDLESGDNGFPGDTDEGE) are disordered. S533 and S544 each carry an O-linked (Xyl...) (glycosaminoglycan) serine glycan. 3 N-linked (GlcNAc...) asparagine glycosylation sites follow: N570, N589, and N696. Cystine bridges form between C638/C704, C659/C728, and C709/C721. The segment at 735–749 (MIWTMMQNKKTFTKP) is interaction with TGF-beta ligand. Residues 786–808 (VMGIAFAAFVIGALLTGALWYIY) form a helical membrane-spanning segment. Topologically, residues 809-850 (SHTGETARRQQVPTSPPASENSSAAHSIGSTQSTPCSSSSTA) are cytoplasmic. Positions 817 to 833 (RQQVPTSPPASENSSAA) are enriched in polar residues. Residues 817–850 (RQQVPTSPPASENSSAAHSIGSTQSTPCSSSSTA) form a disordered region. Residues 835 to 850 (SIGSTQSTPCSSSSTA) are compositionally biased toward low complexity. T839 bears the Phosphothreonine mark.

In terms of assembly, forms homodimers and homooligomers. Interacts with DYNLT4. Interacts with integrin ITGA5:ITGB1; this interaction promotes the internalization and trafficking of ITGA5:ITGB1 into endocytic vesicles. Interacts with TGFB1, BMP2, BMP5, BMP7 or GDF5 and inhibin A via the ligand binding domains. Interacts with ALK3/BMPR1A; this interaction results in the cell surface retention of BMPR1A. Interacts with ALK6/BMPR1B; this interaction enhances BMPR1B-mediated stimulation of the BMP signaling pathway. Interacts with the scaffolding protein beta-arrestin2/ARRB2; this interaction mediates internalization of TGFBR3 and thus regulates migration, actin cytoskeleton and activation of CDC42. Post-translationally, extensively modified by glycosaminoglycan groups (GAG). In terms of processing, phosphorylated in the cytoplasmic domain by the type II receptor TGFBR2 at THR-839 to mediate recruitment of ARRB2 and subsequent internalization of TGFBR2 and TGFBR3.

The protein resides in the cell membrane. It localises to the secreted. Its subcellular location is the extracellular space. The protein localises to the extracellular matrix. In terms of biological role, cell surface receptor that regulates diverse cellular processes including cell proliferation, differentiation, migration, and apoptosis. Initiates BMP, inhibin, and TGF-beta signaling pathways by interacting with different ligands including TGFB1, BMP2, BMP5, BMP7 or GDF5. Alternatively, acts as a cell surface coreceptor for BMP ligands, serving to enhance ligand binding by differentially regulating BMPR1A/ALK3 and BMPR1B/ALK6 receptor trafficking. Promotes epithelial cell adhesion, focal adhesion formation and integrin signaling during epithelial cell spreading on fibronectin. By interacting with the scaffolding protein beta-arrestin2/ARRB2, regulates migration or actin cytoskeleton and promotes the activation of CDC42 as well as the inhibition of NF-kappa-B. In gonadotrope cells, acts as an inhibin A coreceptor and regulates follicle-stimulating hormone (FSH) levels and female fertility. Plays a role in the inhibition of directed and random cell migration in epithelial cells by altering the actin cytoskeletal organization. Participates in epithelial-mesenchymal transformation (EMT) upon binding to BMP2 or TGFB2, by activating the PAR6/SMURF1/RHOA pathway. The polypeptide is Transforming growth factor beta receptor type 3 (Tgfbr3) (Mus musculus (Mouse)).